Consider the following 225-residue polypeptide: Uridylate kinase (225 aa).

Residue 9–10 (GS) coordinates ATP. Gly46 lines the UMP pocket. Residues Gly47 and Arg51 each contribute to the ATP site. Residues Asp67 and 115–121 (THPAHTT) contribute to the UMP site. The ATP site is built by Thr141, Asn142, Tyr147, and Asp150.

It belongs to the UMP kinase family. Homohexamer.

It is found in the cytoplasm. The catalysed reaction is UMP + ATP = UDP + ADP. The protein operates within pyrimidine metabolism; CTP biosynthesis via de novo pathway; UDP from UMP (UMPK route): step 1/1. Inhibited by UTP. In terms of biological role, catalyzes the reversible phosphorylation of UMP to UDP. In Methanococcus maripaludis (strain C6 / ATCC BAA-1332), this protein is Uridylate kinase.